The following is a 402-amino-acid chain: Tryptophan synthase beta chain 2 (402 aa).

K97 carries the post-translational modification N6-(pyridoxal phosphate)lysine.

The protein belongs to the TrpB family. As to quaternary structure, tetramer of two alpha and two beta chains. Pyridoxal 5'-phosphate is required as a cofactor.

It carries out the reaction (1S,2R)-1-C-(indol-3-yl)glycerol 3-phosphate + L-serine = D-glyceraldehyde 3-phosphate + L-tryptophan + H2O. The protein operates within amino-acid biosynthesis; L-tryptophan biosynthesis; L-tryptophan from chorismate: step 5/5. Its function is as follows. The beta subunit is responsible for the synthesis of L-tryptophan from indole and L-serine. The chain is Tryptophan synthase beta chain 2 (trpB2) from Wolinella succinogenes (strain ATCC 29543 / DSM 1740 / CCUG 13145 / JCM 31913 / LMG 7466 / NCTC 11488 / FDC 602W) (Vibrio succinogenes).